The chain runs to 206 residues: ATP phosphoribosyltransferase (206 aa).

This sequence belongs to the ATP phosphoribosyltransferase family. Short subfamily. Heteromultimer composed of HisG and HisZ subunits.

The protein resides in the cytoplasm. It carries out the reaction 1-(5-phospho-beta-D-ribosyl)-ATP + diphosphate = 5-phospho-alpha-D-ribose 1-diphosphate + ATP. Its pathway is amino-acid biosynthesis; L-histidine biosynthesis; L-histidine from 5-phospho-alpha-D-ribose 1-diphosphate: step 1/9. In terms of biological role, catalyzes the condensation of ATP and 5-phosphoribose 1-diphosphate to form N'-(5'-phosphoribosyl)-ATP (PR-ATP). Has a crucial role in the pathway because the rate of histidine biosynthesis seems to be controlled primarily by regulation of HisG enzymatic activity. The protein is ATP phosphoribosyltransferase of Geobacillus sp. (strain WCH70).